The following is a 568-amino-acid chain: 2-succinyl-5-enolpyruvyl-6-hydroxy-3-cyclohexene-1-carboxylate synthase (568 aa).

This sequence belongs to the TPP enzyme family. MenD subfamily. In terms of assembly, homodimer. Mg(2+) serves as cofactor. Requires Mn(2+) as cofactor. Thiamine diphosphate is required as a cofactor.

The enzyme catalyses isochorismate + 2-oxoglutarate + H(+) = 5-enolpyruvoyl-6-hydroxy-2-succinyl-cyclohex-3-ene-1-carboxylate + CO2. Its pathway is quinol/quinone metabolism; 1,4-dihydroxy-2-naphthoate biosynthesis; 1,4-dihydroxy-2-naphthoate from chorismate: step 2/7. It functions in the pathway quinol/quinone metabolism; menaquinone biosynthesis. Catalyzes the thiamine diphosphate-dependent decarboxylation of 2-oxoglutarate and the subsequent addition of the resulting succinic semialdehyde-thiamine pyrophosphate anion to isochorismate to yield 2-succinyl-5-enolpyruvyl-6-hydroxy-3-cyclohexene-1-carboxylate (SEPHCHC). The protein is 2-succinyl-5-enolpyruvyl-6-hydroxy-3-cyclohexene-1-carboxylate synthase of Haemophilus influenzae (strain ATCC 51907 / DSM 11121 / KW20 / Rd).